The chain runs to 256 residues: ATP-dependent dethiobiotin synthetase BioD (256 aa).

13-18 (EVGKTY) lines the ATP pocket. T17 contributes to the Mg(2+) binding site. K38 is an active-site residue. S42 lines the substrate pocket. Residues D56, 118–121 (EGAG), and 187–188 (NR) contribute to the ATP site. Mg(2+)-binding residues include D56 and E118.

It belongs to the dethiobiotin synthetase family. As to quaternary structure, homodimer. Mg(2+) serves as cofactor.

It is found in the cytoplasm. It carries out the reaction (7R,8S)-7,8-diammoniononanoate + CO2 + ATP = (4R,5S)-dethiobiotin + ADP + phosphate + 3 H(+). Its pathway is cofactor biosynthesis; biotin biosynthesis; biotin from 7,8-diaminononanoate: step 1/2. Its function is as follows. Catalyzes a mechanistically unusual reaction, the ATP-dependent insertion of CO2 between the N7 and N8 nitrogen atoms of 7,8-diaminopelargonic acid (DAPA, also called 7,8-diammoniononanoate) to form a ureido ring. This Rhodopirellula baltica (strain DSM 10527 / NCIMB 13988 / SH1) protein is ATP-dependent dethiobiotin synthetase BioD.